Here is a 429-residue protein sequence, read N- to C-terminus: Arginine biosynthesis bifunctional protein ArgJ (429 aa).

Substrate contacts are provided by threonine 181, lysine 207, threonine 218, glutamate 302, asparagine 424, and serine 429. Threonine 218 (nucleophile) is an active-site residue.

It belongs to the ArgJ family. As to quaternary structure, heterotetramer of two alpha and two beta chains.

The protein resides in the cytoplasm. It catalyses the reaction N(2)-acetyl-L-ornithine + L-glutamate = N-acetyl-L-glutamate + L-ornithine. The catalysed reaction is L-glutamate + acetyl-CoA = N-acetyl-L-glutamate + CoA + H(+). The protein operates within amino-acid biosynthesis; L-arginine biosynthesis; L-ornithine and N-acetyl-L-glutamate from L-glutamate and N(2)-acetyl-L-ornithine (cyclic): step 1/1. It participates in amino-acid biosynthesis; L-arginine biosynthesis; N(2)-acetyl-L-ornithine from L-glutamate: step 1/4. Its function is as follows. Catalyzes two activities which are involved in the cyclic version of arginine biosynthesis: the synthesis of N-acetylglutamate from glutamate and acetyl-CoA as the acetyl donor, and of ornithine by transacetylation between N(2)-acetylornithine and glutamate. This is Arginine biosynthesis bifunctional protein ArgJ from Chlorobium chlorochromatii (strain CaD3).